A 294-amino-acid polypeptide reads, in one-letter code: 4-hydroxy-tetrahydrodipicolinate synthase (294 aa).

Pyruvate is bound at residue threonine 47. Residue tyrosine 135 is the Proton donor/acceptor of the active site. Lysine 164 serves as the catalytic Schiff-base intermediate with substrate. Valine 206 contributes to the pyruvate binding site.

The protein belongs to the DapA family. In terms of assembly, homotetramer; dimer of dimers.

The protein resides in the cytoplasm. It carries out the reaction L-aspartate 4-semialdehyde + pyruvate = (2S,4S)-4-hydroxy-2,3,4,5-tetrahydrodipicolinate + H2O + H(+). It participates in amino-acid biosynthesis; L-lysine biosynthesis via DAP pathway; (S)-tetrahydrodipicolinate from L-aspartate: step 3/4. In terms of biological role, catalyzes the condensation of (S)-aspartate-beta-semialdehyde [(S)-ASA] and pyruvate to 4-hydroxy-tetrahydrodipicolinate (HTPA). The sequence is that of 4-hydroxy-tetrahydrodipicolinate synthase from Lachnoclostridium phytofermentans (strain ATCC 700394 / DSM 18823 / ISDg) (Clostridium phytofermentans).